Here is a 118-residue protein sequence, read N- to C-terminus: Large ribosomal subunit protein bL20 (118 aa).

Belongs to the bacterial ribosomal protein bL20 family.

Functionally, binds directly to 23S ribosomal RNA and is necessary for the in vitro assembly process of the 50S ribosomal subunit. It is not involved in the protein synthesizing functions of that subunit. The protein is Large ribosomal subunit protein bL20 of Staphylococcus haemolyticus (strain JCSC1435).